Reading from the N-terminus, the 192-residue chain is 7-methyl-GTP pyrophosphatase (192 aa).

Asp69 (proton acceptor) is an active-site residue.

The protein belongs to the Maf family. YceF subfamily. A divalent metal cation is required as a cofactor.

The protein resides in the cytoplasm. It catalyses the reaction N(7)-methyl-GTP + H2O = N(7)-methyl-GMP + diphosphate + H(+). Nucleoside triphosphate pyrophosphatase that hydrolyzes 7-methyl-GTP (m(7)GTP). May have a dual role in cell division arrest and in preventing the incorporation of modified nucleotides into cellular nucleic acids. This is 7-methyl-GTP pyrophosphatase from Pseudomonas syringae pv. syringae (strain B728a).